A 499-amino-acid chain; its full sequence is Basic immunoglobulin-like variable motif-containing protein (499 aa).

3 disordered regions span residues 1–29, 153–172, and 428–465; these read MPNI…RNNL, LKSR…ERKA, and GNLR…RSFS. Residues 153 to 162 are compositionally biased toward polar residues; sequence LKSRSGVNKQ. The span at 444–453 shows a compositional bias: basic and acidic residues; that stretch reads PKSESEDNVS.

This sequence belongs to the BIVM family.

It is found in the cytoplasm. The protein localises to the nucleus. The sequence is that of Basic immunoglobulin-like variable motif-containing protein (bivm) from Xenopus tropicalis (Western clawed frog).